Here is a 479-residue protein sequence, read N- to C-terminus: MSQFPLSILKTSQPHHQPKSMNAPRSSDARGKRILIDPIDDRISKLPDDVLVMILASLSTEDALKTSVLSTRWKNVWKQVPYLHFDLLSATYESGLIAALSNSVAESITQVINNHNGHLMGCSIHHFAHHCVNGVLENWIRLLTLEKNTRFLSLCNKLGKGRRTNVLRFSPNTFSHPKLATLFLRRYDLVTAHAFKECENLKILKLEGILAEVDVFNTVIASCPSLKVLVLNCMWYNEKTCLKIHNNNLKVLHLDCPHVDCIDVSAALLDIFSIFYFAFAKEQNFVIKAPRLLFNNWTKDLEKVPNMNYNITSHAQEKKNIGHEFVVSGDASYLQKLKSLKVVVDVTNSREVHMLRDILVAWNGVLEELHILFKDNNVPNSKEDSESSIGGTQKKKWEEANLFPNADFRVEVMWMFDFNGSNKKQFALASRFVTQGTVMKKMMIKTSSFFANEKLDNEAVVAKLKELPKGNENLSIECF.

One can recognise an F-box domain in the interval 40–88; sequence DDRISKLPDDVLVMILASLSTEDALKTSVLSTRWKNVWKQVPYLHFDLL.

The protein is Putative F-box protein At1g67390 of Arabidopsis thaliana (Mouse-ear cress).